Here is a 569-residue protein sequence, read N- to C-terminus: Probable protein phosphatase 2C BIPP2C1 (569 aa).

2 disordered regions span residues 166-212 and 251-279; these read GSSN…SSKV and SLDDSEASDGSTTQDFDTDVETESSGSSI. Low complexity predominate over residues 174-183; that stretch reads SEVGVESECG. A PPM-type phosphatase domain is found at 329–564; sequence AAMLPHPSKV…DDVTVVVSVV (236 aa). Positions 358, 359, 488, and 555 each coordinate Mn(2+).

The protein belongs to the PP2C family. The cofactor is Mg(2+). Mn(2+) serves as cofactor.

The enzyme catalyses O-phospho-L-seryl-[protein] + H2O = L-seryl-[protein] + phosphate. It carries out the reaction O-phospho-L-threonyl-[protein] + H2O = L-threonyl-[protein] + phosphate. Its function is as follows. May play a role in responses to biotic and abiotic stresses. In Oryza sativa subsp. indica (Rice), this protein is Probable protein phosphatase 2C BIPP2C1 (BIPP2C1).